The following is a 105-amino-acid chain: Membrane-stabilizing protein A (105 aa).

A helical membrane pass occupies residues M1 to F21. At K22 to R29 the chain is on the cytoplasmic side. A helical membrane pass occupies residues I30–F50. At P51–W55 the chain is on the extracellular side. Residues W56 to L76 form a helical membrane-spanning segment. The Cytoplasmic segment spans residues K77–N84. Residues I85–F105 form a helical membrane-spanning segment.

The protein belongs to the MspA family.

The protein localises to the membrane. Plays a role in toxin production, resistance to host innate immune mechanisms, and iron homeostasis. This Staphylococcus aureus (strain NCTC 8325 / PS 47) protein is Membrane-stabilizing protein A.